The following is a 393-amino-acid chain: Beta-1,4-galactosyltransferase 3 (393 aa).

Topologically, residues 1-10 are cytoplasmic; sequence MLRRLLERPC. Residues 11–31 form a helical; Signal-anchor for type II membrane protein membrane-spanning segment; the sequence is TLALLVGSQLAVMMYLSLGGF. The Lumenal segment spans residues 32-393; that stretch reads RSLSALFGRD…ANHTALRGSH (362 aa). A glycan (N-linked (GlcNAc...) asparagine) is linked at N57. C77 and C119 form a disulfide bridge. 130–134 lines the UDP-alpha-D-galactose pocket; it reads PHRAR. N166 carries an N-linked (GlcNAc...) asparagine glycan. UDP-alpha-D-galactose-binding positions include 169–171, 196–197, Y226, and W258; these read FNR and VD. Cysteines 190 and 209 form a disulfide. D197 contacts Mn(2+). An N-acetyl-D-glucosamine-binding site is contributed by 260–263; sequence GEDD. Residue H291 coordinates Mn(2+). Residue 291-293 participates in UDP-alpha-D-galactose binding; that stretch reads HRG. An N-acetyl-D-glucosamine-binding site is contributed by R303. N-linked (GlcNAc...) asparagine glycans are attached at residues N337 and N385. The segment at 339–393 is disordered; sequence TADIGTDPRGPRAPSGPRYPPGSSQAFRQEMLQRRPPARPGPLSTANHTALRGSH.

This sequence belongs to the glycosyltransferase 7 family. Mn(2+) is required as a cofactor. As to expression, found in various tissues. Highest expression in placenta, prostate, testis, ovary, intestine and muscle, and in fetal brain.

The protein localises to the golgi apparatus. It is found in the golgi stack membrane. It carries out the reaction an N-acetyl-beta-D-glucosaminyl derivative + UDP-alpha-D-galactose = a beta-D-galactosyl-(1-&gt;4)-N-acetyl-beta-D-glucosaminyl derivative + UDP + H(+). It catalyses the reaction N-acetyl-D-glucosamine + UDP-alpha-D-galactose = beta-D-galactosyl-(1-&gt;4)-N-acetyl-D-glucosamine + UDP + H(+). The enzyme catalyses a beta-D-GlcNAc-(1-&gt;3)-beta-D-Gal-(1-&gt;4)-beta-D-Glc-(1&lt;-&gt;1)-Cer(d18:1(4E)) + UDP-alpha-D-galactose = a neolactoside nLc4Cer(d18:1(4E)) + UDP + H(+). The catalysed reaction is a beta-D-glucosylceramide + UDP-alpha-D-galactose = a beta-D-galactosyl-(1-&gt;4)-beta-D-glucosyl-(1&lt;-&gt;1)-ceramide + UDP + H(+). It carries out the reaction a neolactoside IV(3)-beta-GlcNAc-nLc4Cer + UDP-alpha-D-galactose = a neolactoside nLc6Cer + UDP + H(+). Its pathway is protein modification; protein glycosylation. Its function is as follows. Responsible for the synthesis of complex-type N-linked oligosaccharides in many glycoproteins as well as the carbohydrate moieties of glycolipids. The chain is Beta-1,4-galactosyltransferase 3 from Homo sapiens (Human).